The primary structure comprises 341 residues: Golgi-associated RAB2 interactor protein 1B (341 aa).

This sequence belongs to the GARIN family. In terms of tissue distribution, expressed in testis (at protein level).

The protein resides in the golgi apparatus. Its function is as follows. RAB2B effector protein required for accurate acrosome formation and normal male fertility. In complex with RAB2A/RAB2B, seems to suppress excessive vesicle trafficking during acrosome formation. In Mus musculus (Mouse), this protein is Golgi-associated RAB2 interactor protein 1B.